The primary structure comprises 90 residues: Mitochondrial import inner membrane translocase subunit Tim10-B (90 aa).

The Twin CX3C motif motif lies at 29-54 (CHKKCVPPHYKEAELSKGESVCLDRC). 2 disulfide bridges follow: C29/C54 and C33/C50.

Belongs to the small Tim family. Heterohexamer; composed of 3 copies of TIMM9 and 3 copies of TIMM10/TIM10A, named soluble 70 kDa complex. The complex forms a 6-bladed alpha-propeller structure and associates with the TIMM22 component of the TIM22 complex. Interacts with multi-pass transmembrane proteins in transit.

The protein localises to the mitochondrion inner membrane. In terms of biological role, mitochondrial intermembrane chaperone that participates in the import and insertion of multi-pass transmembrane proteins into the mitochondrial inner membrane. May also be required for the transfer of beta-barrel precursors from the TOM complex to the sorting and assembly machinery (SAM complex) of the outer membrane. Acts as a chaperone-like protein that protects the hydrophobic precursors from aggregation and guide them through the mitochondrial intermembrane space. The protein is Mitochondrial import inner membrane translocase subunit Tim10-B (timm10-b) of Xenopus laevis (African clawed frog).